Here is a 137-residue protein sequence, read N- to C-terminus: DNA-binding protein H-NS (137 aa).

A coiled-coil region spans residues 13–65 (TLRAQARECTLETLEEMLEKLEVVVNERREEESAAAAEVEERTRKLQQYREML). A DNA-binding region spans residues 112–117 (QGRTPA).

It belongs to the histone-like protein H-NS family. Homodimer that oligomerizes on DNA into higher-order complexes that form bridges between disparate regions of DNA compacting it. Interacts with Hha, YdgT and StpA.

It is found in the cytoplasm. Its subcellular location is the nucleoid. In terms of biological role, a DNA-binding protein implicated in transcriptional repression and chromosome organization and compaction. Binds AT-rich DNA, repressing its transcription; about 754/4438 tested genes (15%) bind to H-NS, 70% of these are AT-rich and correspond to horizontally transferred geness (HTG), thus playing a central role in silencing foreign genes. This offers the selective advantage of silencing foreign DNA. Binds nucleation sites in AT-rich DNA and bridges them, forming higher-order nucleoprotein complexes and condensing the chromosome. A subset of genes are repressed by H-NS in association with Hha and/or YdgT. The chain is DNA-binding protein H-NS (hns) from Salmonella typhimurium (strain 14028s / SGSC 2262).